A 481-amino-acid polypeptide reads, in one-letter code: Trichosetin biosynthesis cluster MFS transporter (481 aa).

Positions 1-13 are enriched in polar residues; the sequence is MSTTPQMSQSGFQ. The disordered stretch occupies residues 1–63; the sequence is MSTTPQMSQS…DGPDDPQHPL (63 aa). The segment covering 20-31 has biased composition (basic and acidic residues); it reads GAREDVGTEAQE. Residue Asn64 is glycosylated (N-linked (GlcNAc...) asparagine). The helical transmembrane segment at 72–92 threads the bilayer; it reads LHVGIVSLSTLAANLAATMFA. A glycan (N-linked (GlcNAc...) asparagine) is linked at Asn103. 5 consecutive transmembrane segments (helical) span residues 111–131, 147–167, 169–189, 200–220, and 228–248; these read AMTV…LAPL, VYMA…FLVF, IIAG…VADL, ALFA…GGFV, and WTFR…FALM. The N-linked (GlcNAc...) asparagine glycan is linked to Asn252. The next 5 helical transmembrane spans lie at 302-322, 353-373, 380-400, 403-423, and 446-466; these read PIVL…FLLF, LLLM…YGWT, WIVP…VVIP, IYLV…ANLL, and GWGN…PWIF.

The protein belongs to the major facilitator superfamily.

The protein resides in the cell membrane. Efflux pump required for efficient secretion of trichosetin or other secondary metabolies produced by the trichosetin gene cluster. Plays a crucial role in detoxification of the toxic trichosetin in Gibberella fujikuroi cells. In Gibberella fujikuroi (strain CBS 195.34 / IMI 58289 / NRRL A-6831) (Bakanae and foot rot disease fungus), this protein is Trichosetin biosynthesis cluster MFS transporter.